Here is a 143-residue protein sequence, read N- to C-terminus: MRHGFKGRRFARSISHRKSMFANLAVSLLEHEQIVTTLPKAKDLRPIVEKLVTLGKRGDLHARRQVIAQIGNEGVVKRLFDTIAPRYANRNGGYLRIMKAGFRHGDNAAMAVIEFVDRDTSAKGAGDRARLEAEGTDAEAAAA.

Positions 124–133 are enriched in basic and acidic residues; it reads GAGDRARLEA. The disordered stretch occupies residues 124–143; it reads GAGDRARLEAEGTDAEAAAA.

The protein belongs to the bacterial ribosomal protein bL17 family. As to quaternary structure, part of the 50S ribosomal subunit. Contacts protein L32.

This chain is Large ribosomal subunit protein bL17, found in Mesorhizobium japonicum (strain LMG 29417 / CECT 9101 / MAFF 303099) (Mesorhizobium loti (strain MAFF 303099)).